Consider the following 377-residue polypeptide: Nitric oxide reductase FlRd-NAD(+) reductase (377 aa).

This sequence belongs to the FAD-dependent oxidoreductase family. Requires FAD as cofactor.

Its subcellular location is the cytoplasm. The enzyme catalyses 2 reduced [nitric oxide reductase rubredoxin domain] + NAD(+) + H(+) = 2 oxidized [nitric oxide reductase rubredoxin domain] + NADH. Its pathway is nitrogen metabolism; nitric oxide reduction. In terms of biological role, one of at least two accessory proteins for anaerobic nitric oxide (NO) reductase. Reduces the rubredoxin moiety of NO reductase. The polypeptide is Nitric oxide reductase FlRd-NAD(+) reductase (Shigella boydii serotype 18 (strain CDC 3083-94 / BS512)).